The sequence spans 662 residues: Glutathione hydrolase 7 (662 aa).

Topologically, residues 1–106 (MAAENEASQE…AAECSCRQDG (106 aa)) are cytoplasmic. Phosphoserine is present on residues S17, S72, S79, and S83. Positions 26–90 (SFPRLPEDEP…DGSPLRETRK (65 aa)) are disordered. A compositionally biased stretch (low complexity) spans 72–83 (SSSSEMGSQDGS). The helical; Signal-anchor for type II membrane protein transmembrane segment at 107–127 (LTVIVTACLTFATGVTVALVM) threads the bilayer. Residues 128–662 (QIYFGDPQIF…SLDATGASIL (535 aa)) are Extracellular-facing. 9 N-linked (GlcNAc...) asparagine glycosylation sites follow: N198, N267, N283, N330, N353, N394, N519, N523, and N586.

The protein belongs to the gamma-glutamyltransferase family. In terms of assembly, heterodimer composed of the light and heavy chains. The active site is located in the light chain. Post-translationally, cleaved by autocatalysis into a large and a small subunit and the autocatalytic cleavage is essential to the functional activation of the enzyme.

It is found in the membrane. It catalyses the reaction an N-terminal (5-L-glutamyl)-[peptide] + an alpha-amino acid = 5-L-glutamyl amino acid + an N-terminal L-alpha-aminoacyl-[peptide]. It carries out the reaction glutathione + H2O = L-cysteinylglycine + L-glutamate. The catalysed reaction is an S-substituted glutathione + H2O = an S-substituted L-cysteinylglycine + L-glutamate. It functions in the pathway sulfur metabolism; glutathione metabolism. Functionally, hydrolyzes and transfers gamma-glutamyl moieties from glutathione and other gamma-glutamyl compounds to acceptors. This Rattus norvegicus (Rat) protein is Glutathione hydrolase 7.